The primary structure comprises 118 residues: Large ribosomal subunit protein bL19 (118 aa).

Belongs to the bacterial ribosomal protein bL19 family.

This protein is located at the 30S-50S ribosomal subunit interface and may play a role in the structure and function of the aminoacyl-tRNA binding site. The polypeptide is Large ribosomal subunit protein bL19 (Levilactobacillus brevis (strain ATCC 367 / BCRC 12310 / CIP 105137 / JCM 1170 / LMG 11437 / NCIMB 947 / NCTC 947) (Lactobacillus brevis)).